A 140-amino-acid chain; its full sequence is FK506-binding protein 2 (140 aa).

An N-terminal signal peptide occupies residues methionine 1–alanine 19. A PPIase FKBP-type domain is found at glycine 43–glutamine 132.

It belongs to the FKBP-type PPIase family. FKBP2 subfamily.

It is found in the endoplasmic reticulum. The enzyme catalyses [protein]-peptidylproline (omega=180) = [protein]-peptidylproline (omega=0). Inhibited by both FK506 and rapamycin. Functionally, PPIases accelerate the folding of proteins. It catalyzes the cis-trans isomerization of proline imidic peptide bonds in oligopeptides. This Kluyveromyces lactis (strain ATCC 8585 / CBS 2359 / DSM 70799 / NBRC 1267 / NRRL Y-1140 / WM37) (Yeast) protein is FK506-binding protein 2 (FPR2).